The sequence spans 164 residues: Transcriptional regulator MraZ (164 aa).

2 consecutive SpoVT-AbrB domains span residues 7 to 60 (HYTN…EIDG) and 83 to 126 (SEIL…EPGR). The segment at 144 to 164 (QLSARHAAPDAPPLRSHGARE) is disordered.

Belongs to the MraZ family. As to quaternary structure, forms oligomers.

The protein resides in the cytoplasm. It is found in the nucleoid. The protein is Transcriptional regulator MraZ of Methylocella silvestris (strain DSM 15510 / CIP 108128 / LMG 27833 / NCIMB 13906 / BL2).